The following is a 166-amino-acid chain: Interferon gamma (166 aa).

A signal peptide spans 1 to 23 (MNYTSFILAFQLCAILGSSTYYC). A Pyrrolidone carboxylic acid modification is found at Gln-24. N-linked (GlcNAc...) asparagine glycosylation is found at Asn-39 and Asn-106. Positions 147 to 166 (ANLRKRKRSQNPFRGRRALQ) are disordered. The span at 148 to 166 (NLRKRKRSQNPFRGRRALQ) shows a compositional bias: basic residues.

It belongs to the type II (or gamma) interferon family. In terms of assembly, homodimer. Interacts with IFNGR1 (via extracellular domain); this interaction promotes IFNGR1 dimerization. Released primarily from activated T lymphocytes.

The protein resides in the secreted. Type II interferon produced by immune cells such as T-cells and NK cells that plays crucial roles in antimicrobial, antiviral, and antitumor responses by activating effector immune cells and enhancing antigen presentation. Primarily signals through the JAK-STAT pathway after interaction with its receptor IFNGR1 to affect gene regulation. Upon IFNG binding, IFNGR1 intracellular domain opens out to allow association of downstream signaling components JAK2, JAK1 and STAT1, leading to STAT1 activation, nuclear translocation and transcription of IFNG-regulated genes. Many of the induced genes are transcription factors such as IRF1 that are able to further drive regulation of a next wave of transcription. Plays a role in class I antigen presentation pathway by inducing a replacement of catalytic proteasome subunits with immunoproteasome subunits. In turn, increases the quantity, quality, and repertoire of peptides for class I MHC loading. Increases the efficiency of peptide generation also by inducing the expression of activator PA28 that associates with the proteasome and alters its proteolytic cleavage preference. Up-regulates as well MHC II complexes on the cell surface by promoting expression of several key molecules such as cathepsins B/CTSB, H/CTSH, and L/CTSL. Participates in the regulation of hematopoietic stem cells during development and under homeostatic conditions by affecting their development, quiescence, and differentiation. The chain is Interferon gamma (IFNG) from Equus caballus (Horse).